The chain runs to 216 residues: uncharacterized protein (216 aa).

This is an uncharacterized protein from Acanthamoeba polyphaga mimivirus (APMV).